The following is a 390-amino-acid chain: Transposase for insertion sequence element IS256 in transposon Tn4001 (390 aa).

It belongs to the transposase mutator family.

Functionally, required for the transposition of the insertion element. The protein is Transposase for insertion sequence element IS256 in transposon Tn4001 of Enterococcus faecalis (strain ATCC 700802 / V583).